Consider the following 664-residue polypeptide: Glycine--tRNA ligase beta subunit (664 aa).

The protein belongs to the class-II aminoacyl-tRNA synthetase family. As to quaternary structure, tetramer of two alpha and two beta subunits.

The protein resides in the cytoplasm. The catalysed reaction is tRNA(Gly) + glycine + ATP = glycyl-tRNA(Gly) + AMP + diphosphate. The polypeptide is Glycine--tRNA ligase beta subunit (glyS) (Aquifex aeolicus (strain VF5)).